The primary structure comprises 189 residues: Flavin prenyltransferase UbiX (189 aa).

Residues 11 to 13, Ser-37, 88 to 91, and Arg-123 each bind FMN; these read GAS and SMRT. Tyr-153 is a dimethylallyl phosphate binding site.

Belongs to the UbiX/PAD1 family.

It carries out the reaction dimethylallyl phosphate + FMNH2 = prenylated FMNH2 + phosphate. Functionally, flavin prenyltransferase that catalyzes the synthesis of the prenylated FMN cofactor (prenyl-FMN) for 4-hydroxy-3-polyprenylbenzoic acid decarboxylase UbiD. The prenyltransferase is metal-independent and links a dimethylallyl moiety from dimethylallyl monophosphate (DMAP) to the flavin N5 and C6 atoms of FMN. This chain is Flavin prenyltransferase UbiX, found in Neisseria meningitidis serogroup B (strain ATCC BAA-335 / MC58).